The following is a 215-amino-acid chain: ATP-dependent Clp protease proteolytic subunit 1 (215 aa).

The active-site Nucleophile is the Ser111. The active site involves His136.

Belongs to the peptidase S14 family. In terms of assembly, fourteen ClpP subunits assemble into 2 heptameric rings which stack back to back to give a disk-like structure with a central cavity, resembling the structure of eukaryotic proteasomes.

The protein resides in the cytoplasm. The enzyme catalyses Hydrolysis of proteins to small peptides in the presence of ATP and magnesium. alpha-casein is the usual test substrate. In the absence of ATP, only oligopeptides shorter than five residues are hydrolyzed (such as succinyl-Leu-Tyr-|-NHMec, and Leu-Tyr-Leu-|-Tyr-Trp, in which cleavage of the -Tyr-|-Leu- and -Tyr-|-Trp bonds also occurs).. Its function is as follows. Cleaves peptides in various proteins in a process that requires ATP hydrolysis. Has a chymotrypsin-like activity. Plays a major role in the degradation of misfolded proteins. This is ATP-dependent Clp protease proteolytic subunit 1 from Gluconobacter oxydans (strain 621H) (Gluconobacter suboxydans).